The primary structure comprises 231 residues: Sensory transduction protein BceR (231 aa).

The Response regulatory domain occupies 3–116; the sequence is KIMLIEDDHT…VLVAKIQAIL (114 aa). Asp52 carries the 4-aspartylphosphate modification. The segment at residues 127–225 is a DNA-binding region (ompR/PhoB-type); the sequence is TQLKTWCGAT…KVGQGYMAKE (99 aa).

In terms of processing, phosphorylated by BceS.

The protein localises to the cytoplasm. Functionally, member of the two-component regulatory system BceS/BceR involved in the regulation of bacitracin resistance. When activated by BceS, binds to the upstream region of the bceAB promoter and up-regulates the expression of these two genes. The chain is Sensory transduction protein BceR (bceR) from Halalkalibacterium halodurans (strain ATCC BAA-125 / DSM 18197 / FERM 7344 / JCM 9153 / C-125) (Bacillus halodurans).